We begin with the raw amino-acid sequence, 387 residues long: Ubiquitin-conjugating enzyme E2 25 (387 aa).

The disordered stretch occupies residues 117-164; sequence APPVRDDIDEGRGSDISDTTSEPIDDDMAGDGEVDDDDEEEEDDEDAD. Over residues 120–131 the composition is skewed to basic and acidic residues; that stretch reads VRDDIDEGRGSD. Positions 139 to 164 are enriched in acidic residues; it reads PIDDDMAGDGEVDDDDEEEEDDEDAD. Positions 214-380 constitute a UBC core domain; it reads TATDRLMKEI…QQIHAKSGWY (167 aa). The Glycyl thioester intermediate role is filled by C315.

It belongs to the ubiquitin-conjugating enzyme family. In the embryo, expressed in precursor neuron and muscle cells and in other cells such as hypodermal cells. After hatching of L1 larvae and in all subsequent stages, strongest expression in pharyngeal muscle and anal muscle cells. In L4 larvae and adolescent hermaphrodites, also expressed in the vulval muscles. Expression also detected in all four nerve cords and in neurons with weaker levels in all body wall muscles.

It is found in the cytoplasm. The protein resides in the nucleus. It carries out the reaction S-ubiquitinyl-[E1 ubiquitin-activating enzyme]-L-cysteine + [E2 ubiquitin-conjugating enzyme]-L-cysteine = [E1 ubiquitin-activating enzyme]-L-cysteine + S-ubiquitinyl-[E2 ubiquitin-conjugating enzyme]-L-cysteine.. It functions in the pathway protein modification; protein ubiquitination. In terms of biological role, catalyzes the covalent attachment of ubiquitin to other proteins (Potential). Required for the maintenance of neuromuscular function. This Caenorhabditis elegans protein is Ubiquitin-conjugating enzyme E2 25.